A 260-amino-acid chain; its full sequence is UPF0246 protein Cbei_1739 (260 aa).

Belongs to the UPF0246 family.

The protein is UPF0246 protein Cbei_1739 of Clostridium beijerinckii (strain ATCC 51743 / NCIMB 8052) (Clostridium acetobutylicum).